The primary structure comprises 1752 residues: DNA-directed RNA polymerase II subunit rpb1 (1752 aa).

Zn(2+) contacts are provided by Cys69, Cys72, Cys79, His82, Cys109, Cys112, Cys150, and Cys175. Residues Asp487, Asp489, and Asp491 each coordinate Mg(2+). The interval 816–828 is bridging helix; that stretch reads PQEFFFHAMAGRE. Lys1252 participates in a covalent cross-link: Glycyl lysine isopeptide (Lys-Gly) (interchain with G-Cter in ubiquitin). Ser1489, Ser1499, Ser1506, and Ser1529 each carry phosphoserine. Residue Tyr1531 is modified to Phosphotyrosine. The tract at residues 1554–1752 is disordered; that stretch reads TSPSYSPSSP…SPSYSPTSPS (199 aa). A run of 5 repeats spans residues 1558–1564, 1578–1584, 1585–1591, 1592–1598, and 1599–1605. The C-terminal domain (CTD); 26 X 7 AA approximate tandem repeats of Y-S-P-[TS]-S-P-S stretch occupies residues 1558 to 1752; it reads YSPSSPGYST…SPSYSPTSPS (195 aa). Residues 1606–1612 form a 6; approximate repeat; the sequence is YSATSPS. Repeat copies occupy residues 1613–1619, 1620–1626, 1627–1633, 1634–1640, 1641–1647, 1648–1654, 1655–1661, 1662–1668, 1669–1675, 1676–1682, 1683–1689, 1690–1696, 1697–1703, 1704–1710, 1711–1717, 1718–1724, 1725–1731, 1732–1738, 1739–1745, and 1746–1752.

This sequence belongs to the RNA polymerase beta' chain family. Component of the RNA polymerase II (Pol II) complex consisting of 12 subunits. In terms of processing, the tandem 7 residues repeats in the C-terminal domain (CTD) can be highly phosphorylated. The phosphorylation activates Pol II. Phosphorylation occurs mainly at residues 'Ser-2' and 'Ser-5' of the heptapeptide repeat. The phosphorylation state is believed to result from the balanced action of site-specific CTD kinases and phosphatase, and a 'CTD code' that specifies the position of Pol II within the transcription cycle has been proposed. Following transcription stress, the elongating form of RNA polymerase II (RNA pol IIo) is polyubiquitinated via 'Lys-63'-linkages on Lys-1252 at DNA damage sites without leading to degradation: ubiquitination promotes RNA pol IIo backtracking to allow access by the transcription-coupled nucleotide excision repair (TC-NER) machinery. Subsequent def1-dependent polyubiquitination by the elongin complex via 'Lys-48'-linkages may lead to proteasome-mediated degradation; presumably at stalled RNA pol II where TC-NER has failed, to halt global transcription and enable 'last resort' DNA repair pathways.

The protein localises to the nucleus. The catalysed reaction is RNA(n) + a ribonucleoside 5'-triphosphate = RNA(n+1) + diphosphate. Its function is as follows. DNA-dependent RNA polymerase catalyzes the transcription of DNA into RNA using the four ribonucleoside triphosphates as substrates. Largest and catalytic component of RNA polymerase II which synthesizes mRNA precursors and many functional non-coding RNAs. Forms the polymerase active center together with the second largest subunit. Pol II is the central component of the basal RNA polymerase II transcription machinery. It is composed of mobile elements that move relative to each other. RPB1 is part of the core element with the central large cleft, the clamp element that moves to open and close the cleft and the jaws that are thought to grab the incoming DNA template. At the start of transcription, a single-stranded DNA template strand of the promoter is positioned within the central active site cleft of Pol II. A bridging helix emanates from RPB1 and crosses the cleft near the catalytic site and is thought to promote translocation of Pol II by acting as a ratchet that moves the RNA-DNA hybrid through the active site by switching from straight to bent conformations at each step of nucleotide addition. During transcription elongation, Pol II moves on the template as the transcript elongates. Elongation is influenced by the phosphorylation status of the C-terminal domain (CTD) of Pol II largest subunit (RPB1), which serves as a platform for assembly of factors that regulate transcription initiation, elongation, termination and mRNA processing. This chain is DNA-directed RNA polymerase II subunit rpb1 (rpb1), found in Schizosaccharomyces pombe (strain 972 / ATCC 24843) (Fission yeast).